We begin with the raw amino-acid sequence, 325 residues long: Aminotransferase tasG (325 aa).

Gly35 contributes to the substrate binding site. Pyridoxal 5'-phosphate contacts are provided by residues 89 to 90 (TW), Asn143, Tyr174, and 203 to 205 (SFA). Residue Asn143 coordinates substrate. Position 206 is an N6-(pyridoxal phosphate)lysine (Lys206). Arg214 lines the pyridoxal 5'-phosphate pocket.

Belongs to the class-I pyridoxal-phosphate-dependent aminotransferase family. Homodimer. Pyridoxal 5'-phosphate is required as a cofactor.

The protein operates within secondary metabolite biosynthesis. Functionally, aminotransferase; part of the gene cluster that mediates the biosynthesis of the tetramic acids Sch210971 and Sch210972, potential anti-HIV fungal natural product that contain a decalin core. The PKS module of tasS together with the enoylreductase tasC catalyze the formation of the polyketide unit which is then conjugated to 4-hydroxyl-4-methyl glutamate (HMG) by the condensation domain of the tasS NRPS module. One unique structural feature of Sch210971 and Sch210972 is the tetramic acid motif proposed to be derived from the non-proteinogenic amino acid HMG, by a Dieckmann-type condensation catalyzed by the reductase domain of tasS. The aldolase tasA catalyzes the aldol condensation of 2 molecules of pyruvic acid to yield the intermediate 4-hydroxyl-4-methyl-2-oxoglutarate (HMOG), which can then be stereoselectively transaminated, may be by tasG, to form HMG. The Diels-Alderase tas3 then uses the Dieckmann product of tasS as substrate and catalyzes the Diels-Alder cycloaddition to form the decalin ring of Sch210971 and Sch210972. This is Aminotransferase tasG from Hapsidospora irregularis.